A 341-amino-acid chain; its full sequence is S-adenosylmethionine:tRNA ribosyltransferase-isomerase (341 aa).

This sequence belongs to the QueA family. Monomer.

Its subcellular location is the cytoplasm. The catalysed reaction is 7-aminomethyl-7-carbaguanosine(34) in tRNA + S-adenosyl-L-methionine = epoxyqueuosine(34) in tRNA + adenine + L-methionine + 2 H(+). It participates in tRNA modification; tRNA-queuosine biosynthesis. In terms of biological role, transfers and isomerizes the ribose moiety from AdoMet to the 7-aminomethyl group of 7-deazaguanine (preQ1-tRNA) to give epoxyqueuosine (oQ-tRNA). The chain is S-adenosylmethionine:tRNA ribosyltransferase-isomerase from Chlorobium phaeobacteroides (strain DSM 266 / SMG 266 / 2430).